Consider the following 91-residue polypeptide: Small ribosomal subunit protein uS19 (91 aa).

The protein belongs to the universal ribosomal protein uS19 family.

Functionally, protein S19 forms a complex with S13 that binds strongly to the 16S ribosomal RNA. The sequence is that of Small ribosomal subunit protein uS19 from Dechloromonas aromatica (strain RCB).